Here is a 109-residue protein sequence, read N- to C-terminus: Staphostatin B (109 aa).

Residues 97–101 (IGTSR) are binds to staphopain B.

The protein belongs to the protease inhibitor I57 (SspC) family. As to quaternary structure, forms a stable non-covalent complex with prematurely activated/folded SspB.

It is found in the cytoplasm. In terms of biological role, specifically inhibits the cysteine protease staphopain B (SspB) by blocking the active site of the enzyme. Probably required to protect cytoplasmic proteins from being degraded by prematurely activated/folded prostaphopain B. Also involved in growth capacity, viability and bacterial morphology. The sequence is that of Staphostatin B (sspC) from Staphylococcus aureus (strain MRSA252).